A 756-amino-acid polypeptide reads, in one-letter code: 5-methyltetrahydropteroyltriglutamate--homocysteine methyltransferase (756 aa).

5-methyltetrahydropteroyltri-L-glutamate-binding positions include Arg-16–Lys-19 and Lys-112. L-homocysteine-binding positions include Ile-432 to Ser-434 and Glu-485. Residues Ile-432–Ser-434 and Glu-485 each bind L-methionine. 5-methyltetrahydropteroyltri-L-glutamate-binding positions include Arg-516–Cys-517 and Trp-562. Asp-600 serves as a coordination point for L-homocysteine. Residue Asp-600 participates in L-methionine binding. Residue Glu-606 coordinates 5-methyltetrahydropteroyltri-L-glutamate. Residues His-642, Cys-644, and Glu-666 each contribute to the Zn(2+) site. His-695 (proton donor) is an active-site residue. Residue Cys-727 coordinates Zn(2+).

The protein belongs to the vitamin-B12 independent methionine synthase family. It depends on Zn(2+) as a cofactor.

The catalysed reaction is 5-methyltetrahydropteroyltri-L-glutamate + L-homocysteine = tetrahydropteroyltri-L-glutamate + L-methionine. It participates in amino-acid biosynthesis; L-methionine biosynthesis via de novo pathway; L-methionine from L-homocysteine (MetE route): step 1/1. Its function is as follows. Catalyzes the transfer of a methyl group from 5-methyltetrahydrofolate to homocysteine resulting in methionine formation. The chain is 5-methyltetrahydropteroyltriglutamate--homocysteine methyltransferase from Haemophilus influenzae (strain PittEE).